A 273-amino-acid chain; its full sequence is Undecaprenyl-diphosphatase (273 aa).

7 helical membrane-spanning segments follow: residues 6–26, 45–65, 90–110, 116–136, 190–210, 222–242, and 252–272; these read SLLI…LPVS, AKTF…VMFW, LTLI…LLFH, LFNP…LIAA, YAAS…ATAL, GDIS…LIAI, and ISFI…YVVF.

Belongs to the UppP family.

It localises to the cell inner membrane. It carries out the reaction di-trans,octa-cis-undecaprenyl diphosphate + H2O = di-trans,octa-cis-undecaprenyl phosphate + phosphate + H(+). Catalyzes the dephosphorylation of undecaprenyl diphosphate (UPP). Confers resistance to bacitracin. The sequence is that of Undecaprenyl-diphosphatase from Shigella sonnei (strain Ss046).